Consider the following 387-residue polypeptide: S-adenosylmethionine synthase (387 aa).

ATP is bound at residue H15. D17 serves as a coordination point for Mg(2+). Residue E43 participates in K(+) binding. E56 and Q99 together coordinate L-methionine. The tract at residues 99–109 (QSPDIAQGVNR) is flexible loop. Residues 166–168 (DAK), 232–233 (RF), D241, 247–248 (RK), A264, and K268 each bind ATP. D241 lines the L-methionine pocket. K272 serves as a coordination point for L-methionine.

This sequence belongs to the AdoMet synthase family. As to quaternary structure, homotetramer; dimer of dimers. Mg(2+) is required as a cofactor. The cofactor is K(+).

It is found in the cytoplasm. The catalysed reaction is L-methionine + ATP + H2O = S-adenosyl-L-methionine + phosphate + diphosphate. Its pathway is amino-acid biosynthesis; S-adenosyl-L-methionine biosynthesis; S-adenosyl-L-methionine from L-methionine: step 1/1. Catalyzes the formation of S-adenosylmethionine (AdoMet) from methionine and ATP. The overall synthetic reaction is composed of two sequential steps, AdoMet formation and the subsequent tripolyphosphate hydrolysis which occurs prior to release of AdoMet from the enzyme. The protein is S-adenosylmethionine synthase of Nitrosomonas europaea (strain ATCC 19718 / CIP 103999 / KCTC 2705 / NBRC 14298).